The chain runs to 228 residues: Prolactin (228 aa).

An N-terminal signal peptide occupies residues 1-29 (MGTKRSSLKGSLLLLLLMSSLFLFKSVES). A disulfide bridge links cysteine 33 with cysteine 40. A phosphoserine mark is found at serine 55, serine 63, and serine 119. 2 disulfides stabilise this stretch: cysteine 87/cysteine 203 and cysteine 220/cysteine 228.

This sequence belongs to the somatotropin/prolactin family. Interacts with PRLR.

The protein localises to the secreted. Functionally, prolactin acts primarily on the mammary gland by promoting lactation, mammogenesis, mitogenesis and osmoregulation. In Trichosurus vulpecula (Brush-tailed possum), this protein is Prolactin (PRL).